Here is a 94-residue protein sequence, read N- to C-terminus: Co-chaperonin GroES (94 aa).

It belongs to the GroES chaperonin family. Heptamer of 7 subunits arranged in a ring. Interacts with the chaperonin GroEL.

The protein resides in the cytoplasm. In terms of biological role, together with the chaperonin GroEL, plays an essential role in assisting protein folding. The GroEL-GroES system forms a nano-cage that allows encapsulation of the non-native substrate proteins and provides a physical environment optimized to promote and accelerate protein folding. GroES binds to the apical surface of the GroEL ring, thereby capping the opening of the GroEL channel. The chain is Co-chaperonin GroES from Brevibacillus brevis (strain 47 / JCM 6285 / NBRC 100599).